A 377-amino-acid polypeptide reads, in one-letter code: Nitric oxide reductase FlRd-NAD(+) reductase (377 aa).

This sequence belongs to the FAD-dependent oxidoreductase family. FAD is required as a cofactor.

The protein resides in the cytoplasm. It carries out the reaction 2 reduced [nitric oxide reductase rubredoxin domain] + NAD(+) + H(+) = 2 oxidized [nitric oxide reductase rubredoxin domain] + NADH. The protein operates within nitrogen metabolism; nitric oxide reduction. Functionally, one of at least two accessory proteins for anaerobic nitric oxide (NO) reductase. Reduces the rubredoxin moiety of NO reductase. This chain is Nitric oxide reductase FlRd-NAD(+) reductase, found in Salmonella newport (strain SL254).